A 166-amino-acid chain; its full sequence is Transcription antitermination protein NusB (166 aa).

The segment covering 1–18 (MISDESDRFNPRDPKPAD) has biased composition (basic and acidic residues). Positions 1–28 (MISDESDRFNPRDPKPADAGKPSKSAKR) are disordered.

This sequence belongs to the NusB family.

Its function is as follows. Involved in transcription antitermination. Required for transcription of ribosomal RNA (rRNA) genes. Binds specifically to the boxA antiterminator sequence of the ribosomal RNA (rrn) operons. This chain is Transcription antitermination protein NusB, found in Pseudomonas putida (strain GB-1).